The following is a 238-amino-acid chain: Endothelial protein C receptor (238 aa).

An N-terminal signal peptide occupies residues 1-17 (MLTTLLPILLLSGWAFC). The Extracellular segment spans residues 18 to 210 (SQDASDGLQR…GSQTSRSYTS (193 aa)). N-linked (GlcNAc...) asparagine glycans are attached at residues Asn47, Asn64, Asn136, and Asn172. Cys118 and Cys186 are oxidised to a cystine. The helical transmembrane segment at 211 to 231 (LVLGVLVGSFIIAGVAVGIFL) threads the bilayer. The Cytoplasmic portion of the chain corresponds to 232-238 (CTGGRRC).

N-glycosylated. In terms of processing, a soluble form exists; probably released by a metalloprotease. Seems to have the same activity as the membrane-bound form. Expressed strongly in the endothelial cells of arteries and veins in heart and lung, less intensely in capillaries in the lung and skin, and not at all in the endothelium of small vessels of the liver and kidney.

It is found in the membrane. In terms of biological role, binds activated protein C. Enhances protein C activation by the thrombin-thrombomodulin complex; plays a role in the protein C pathway controlling blood coagulation. This chain is Endothelial protein C receptor (PROCR), found in Homo sapiens (Human).